The sequence spans 411 residues: Solute carrier RCH1 (411 aa).

The Cytoplasmic segment spans residues 1–17; sequence MSLETFRESKAYKWTSK. The helical transmembrane segment at 18 to 38 threads the bilayer; it reads VISFLIGQWFFIFLGVFIALA. Residues 39 to 52 lie on the Extracellular side of the membrane; sequence HSYPEFAKQGGTIR. The chain crosses the membrane as a helical span at residues 53 to 73; sequence AEYSIGYGAVAVIFLISGLSM. At 74–89 the chain is on the cytoplasmic side; sequence STKQLLVNVANWRAHF. Residues 90-110 traverse the membrane as a helical segment; that stretch reads TVLSMSFLVTSAIIYGIASGI. Topologically, residues 111–120 are extracellular; it reads KASHNGQIDD. Residues 121–141 traverse the membrane as a helical segment; it reads WLLIGLIVTHACPTTVSSNVV. Residues 142-150 lie on the Cytoplasmic side of the membrane; sequence MTKQAHGND. A helical membrane pass occupies residues 151–171; it reads ILTLCEVFIGNVLGAFITPAL. Topologically, residues 172–204 are extracellular; that stretch reads LQMYMRGTWEIGNPSHQTQGDSTVQELYAHTMK. Residues 205–225 form a helical membrane-spanning segment; that stretch reads QLGLSVFVPLFVGQVVQNIFP. The Cytoplasmic segment spans residues 226–242; the sequence is KQTKWCLTTFKLNKVGS. A helical transmembrane segment spans residues 243–263; it reads FMLLLIMFQSFSTAFAQHAFT. Residues 264 to 269 are Extracellular-facing; that stretch reads SVSHAS. Residues 270–290 traverse the membrane as a helical segment; that stretch reads IIFLVFFNIGIYLFFTVLTFF. Topologically, residues 291 to 329 are cytoplasmic; the sequence is YSRPFWILRVFKEEPNESSSKLYRYSYAFFRPFYYNRKD. A helical transmembrane segment spans residues 330 to 350; the sequence is TVAVMLCGPAKTAALGVSLVS. At 351–361 the chain is on the extracellular side; it reads SQYGSHNPKLG. Residues 362-382 form a helical membrane-spanning segment; it reads IILVPLVLYQAEQVMTANVLV. Residues 383–411 lie on the Cytoplasmic side of the membrane; that stretch reads SFMRKWIHAEDKVPEDEETSVGSDNDPKK.

It belongs to the bile acid:sodium symporter (BASS) (TC 2.A.28) family.

It localises to the cell membrane. The protein resides in the bud neck. In terms of biological role, solute carrier protein that negatively regulates the cytosolic homeostasis in response to high levels of extracellular calcium. The chain is Solute carrier RCH1 from Candida albicans (strain SC5314 / ATCC MYA-2876) (Yeast).